A 365-amino-acid polypeptide reads, in one-letter code: Coxsackievirus and adenovirus receptor (365 aa).

The N-terminal stretch at methionine 1–serine 19 is a signal peptide. 2 consecutive Ig-like C2-type domains span residues leucine 20–histidine 134 and proline 141–asparagine 228. At leucine 20–glycine 237 the chain is on the extracellular side. Intrachain disulfides connect cysteine 41–cysteine 120 and cysteine 162–cysteine 212. Asparagine 106 and asparagine 201 each carry an N-linked (GlcNAc...) asparagine glycan. The chain crosses the membrane as a helical span at residues leucine 238–phenylalanine 258. S-palmitoyl cysteine attachment occurs at residues cysteine 259 and cysteine 260. The Cytoplasmic segment spans residues cysteine 259–valine 365. Residues tyrosine 269–proline 282 show a composition bias toward basic and acidic residues. Positions tyrosine 269 to proline 343 are disordered. Residues serine 286–proline 322 show a composition bias toward polar residues. Phosphoserine occurs at positions 297, 304, 306, 323, 332, and 363. The short motif at lysine 360–valine 365 is the PDZ-binding element.

In terms of assembly, monomer. May form homodimer. Interacts with LNX, MAGI1, DLG4, PRKCABP, TJP1 and CTNNB1. Interacts with MPDZ; recruits MPDZ to intercellular contact sites. Interacts with JAML (homodimeric form). Secreted isoform 3, isoform 4 and isoform 5 can interact with the extracellular domain of the receptor. As to quaternary structure, (Microbial infection) Interacts with adenovirus subgroups A, C, D, E and F fiber proteins as well as coxsackievirus B1, B2, B3, B4, B5 and B6 capsid proteins. Post-translationally, N-glycosylated. In terms of processing, palmitoylated on Cys-259 and/or Cys-260; required for proper localization to the plasma membrane. As to expression, expressed in pancreas, brain, heart, small intestine, testis, prostate and at a lower level in liver and lung. Isoform 5 is ubiquitously expressed. Isoform 3 is expressed in heart, lung and pancreas. In skeletal muscle, isoform 1 is found at the neuromuscular junction and isoform 2 is found in blood vessels. In cardiac muscle, isoform 1 and isoform 2 are found at intercalated disks. In heart expressed in subendothelial layers of the vessel wall but not in the luminal endothelial surface. Expression is elevated in hearts with dilated cardiomyopathy.

The protein resides in the cell membrane. It localises to the basolateral cell membrane. The protein localises to the cell junction. Its subcellular location is the tight junction. It is found in the adherens junction. The protein resides in the secreted. Its function is as follows. Component of the epithelial apical junction complex that may function as a homophilic cell adhesion molecule and is essential for tight junction integrity. Also involved in transepithelial migration of leukocytes through adhesive interactions with JAML a transmembrane protein of the plasma membrane of leukocytes. The interaction between both receptors also mediates the activation of gamma-delta T-cells, a subpopulation of T-cells residing in epithelia and involved in tissue homeostasis and repair. Upon epithelial CXADR-binding, JAML induces downstream cell signaling events in gamma-delta T-cells through PI3-kinase and MAP kinases. It results in proliferation and production of cytokines and growth factors by T-cells that in turn stimulate epithelial tissues repair. In terms of biological role, (Microbial infection) Acts as a receptor for adenovirus type C. Functionally, (Microbial infection) Acts as a receptor for Coxsackievirus B1 to B6. This chain is Coxsackievirus and adenovirus receptor (CXADR), found in Homo sapiens (Human).